A 321-amino-acid polypeptide reads, in one-letter code: Large ribosomal subunit protein uL10 (321 aa).

Positions 284 to 321 (SAGTAPTGGGAAAAAVEEKKEEPEEESDDDIGFSLFDD) are disordered. Positions 306–321 (PEEESDDDIGFSLFDD) are enriched in acidic residues.

Belongs to the universal ribosomal protein uL10 family. P0 forms a pentameric complex by interaction with dimers of P1 and P2. Phosphorylated.

Ribosomal protein P0 is the functional equivalent of E.coli protein L10. In Oxybasis rubra (Red goosefoot), this protein is Large ribosomal subunit protein uL10.